The sequence spans 339 residues: Ketol-acid reductoisomerase (NADP(+)) (339 aa).

The KARI N-terminal Rossmann domain occupies 1 to 182 (MRVYYDRDAD…GGGRAGIIET (182 aa)). NADP(+) is bound by residues 24–27 (YGSQ), Arg-48, Ser-51, Thr-53, and 83–86 (DELQ). The active site involves His-108. Gly-134 serves as a coordination point for NADP(+). The 146-residue stretch at 183-328 (TFREECETDL…AKLRAMMPWI (146 aa)) folds into the KARI C-terminal knotted domain. The Mg(2+) site is built by Asp-191, Glu-195, Glu-227, and Glu-231. Ser-252 provides a ligand contact to substrate.

This sequence belongs to the ketol-acid reductoisomerase family. The cofactor is Mg(2+).

The catalysed reaction is (2R)-2,3-dihydroxy-3-methylbutanoate + NADP(+) = (2S)-2-acetolactate + NADPH + H(+). It carries out the reaction (2R,3R)-2,3-dihydroxy-3-methylpentanoate + NADP(+) = (S)-2-ethyl-2-hydroxy-3-oxobutanoate + NADPH + H(+). Its pathway is amino-acid biosynthesis; L-isoleucine biosynthesis; L-isoleucine from 2-oxobutanoate: step 2/4. It functions in the pathway amino-acid biosynthesis; L-valine biosynthesis; L-valine from pyruvate: step 2/4. Involved in the biosynthesis of branched-chain amino acids (BCAA). Catalyzes an alkyl-migration followed by a ketol-acid reduction of (S)-2-acetolactate (S2AL) to yield (R)-2,3-dihydroxy-isovalerate. In the isomerase reaction, S2AL is rearranged via a Mg-dependent methyl migration to produce 3-hydroxy-3-methyl-2-ketobutyrate (HMKB). In the reductase reaction, this 2-ketoacid undergoes a metal-dependent reduction by NADPH to yield (R)-2,3-dihydroxy-isovalerate. This chain is Ketol-acid reductoisomerase (NADP(+)), found in Methylocella silvestris (strain DSM 15510 / CIP 108128 / LMG 27833 / NCIMB 13906 / BL2).